A 288-amino-acid polypeptide reads, in one-letter code: UTP--glucose-1-phosphate uridylyltransferase (288 aa).

Belongs to the UDPGP type 2 family.

It carries out the reaction alpha-D-glucose 1-phosphate + UTP + H(+) = UDP-alpha-D-glucose + diphosphate. The protein operates within glycolipid metabolism; diglucosyl-diacylglycerol biosynthesis. Its function is as follows. Catalyzes the formation of UDP-glucose from glucose-1-phosphate and UTP. This is an intermediate step in the biosynthesis of diglucosyl-diacylglycerol (Glc2-DAG), i.e. a glycolipid found in the membrane, which is also used as a membrane anchor for lipoteichoic acid (LTA). The chain is UTP--glucose-1-phosphate uridylyltransferase (gtaB) from Staphylococcus epidermidis (strain ATCC 35984 / DSM 28319 / BCRC 17069 / CCUG 31568 / BM 3577 / RP62A).